The sequence spans 116 residues: Large ribosomal subunit protein bL17 (116 aa).

This sequence belongs to the bacterial ribosomal protein bL17 family. In terms of assembly, part of the 50S ribosomal subunit. Contacts protein L32.

This is Large ribosomal subunit protein bL17 from Synechococcus sp. (strain CC9311).